The sequence spans 376 residues: Alanine racemase 1 (376 aa).

Lys-40 acts as the Proton acceptor; specific for D-alanine in catalysis. N6-(pyridoxal phosphate)lysine is present on Lys-40. Arg-138 provides a ligand contact to substrate. Tyr-268 acts as the Proton acceptor; specific for L-alanine in catalysis. Met-316 serves as a coordination point for substrate.

This sequence belongs to the alanine racemase family. Pyridoxal 5'-phosphate serves as cofactor.

The enzyme catalyses L-alanine = D-alanine. Its pathway is amino-acid biosynthesis; D-alanine biosynthesis; D-alanine from L-alanine: step 1/1. Its function is as follows. Catalyzes the interconversion of L-alanine and D-alanine. May also act on other amino acids. This is Alanine racemase 1 (alr1) from Oceanobacillus iheyensis (strain DSM 14371 / CIP 107618 / JCM 11309 / KCTC 3954 / HTE831).